The following is a 152-amino-acid chain: Small ribosomal subunit protein uS11 (152 aa).

This sequence belongs to the universal ribosomal protein uS11 family. In terms of assembly, component of the small ribosomal subunit. Part of the small subunit (SSU) processome, composed of more than 70 proteins and the RNA chaperone small nucleolar RNA (snoRNA) U3.

The protein localises to the cytoplasm. It localises to the nucleus. The protein resides in the nucleolus. Functionally, component of the small ribosomal subunit. The ribosome is a large ribonucleoprotein complex responsible for the synthesis of proteins in the cell. Part of the small subunit (SSU) processome, first precursor of the small eukaryotic ribosomal subunit. During the assembly of the SSU processome in the nucleolus, many ribosome biogenesis factors, an RNA chaperone and ribosomal proteins associate with the nascent pre-rRNA and work in concert to generate RNA folding, modifications, rearrangements and cleavage as well as targeted degradation of pre-ribosomal RNA by the RNA exosome. The polypeptide is Small ribosomal subunit protein uS11 (rps-14) (Caenorhabditis elegans).